Consider the following 404-residue polypeptide: Acetate kinase (404 aa).

Position 7 (asparagine 7) interacts with Mg(2+). Lysine 14 contributes to the ATP binding site. Position 95 (arginine 95) interacts with substrate. Aspartate 152 (proton donor/acceptor) is an active-site residue. Residues 212–216 (HLGNG), 286–288 (DMR), and 334–338 (GIGEN) contribute to the ATP site. Glutamate 388 is a Mg(2+) binding site.

Belongs to the acetokinase family. As to quaternary structure, homodimer. It depends on Mg(2+) as a cofactor. The cofactor is Mn(2+).

It localises to the cytoplasm. The catalysed reaction is acetate + ATP = acetyl phosphate + ADP. It functions in the pathway metabolic intermediate biosynthesis; acetyl-CoA biosynthesis; acetyl-CoA from acetate: step 1/2. Functionally, catalyzes the formation of acetyl phosphate from acetate and ATP. Can also catalyze the reverse reaction. This Nitratidesulfovibrio vulgaris (strain DSM 19637 / Miyazaki F) (Desulfovibrio vulgaris) protein is Acetate kinase.